The chain runs to 504 residues: L-carnitine/gamma-butyrobetaine antiporter (504 aa).

Helical transmembrane passes span Ile10–Val30, Trp51–Phe71, Ile92–Ile112, Gly143–Val163, Phe195–Val215, Leu231–Leu251, Ser263–Met283, Trp316–Ala336, Leu347–Gly367, Trp398–Ala418, Leu446–Leu466, and Ala475–Ile495.

This sequence belongs to the BCCT transporter (TC 2.A.15) family. CaiT subfamily. Homotrimer.

It is found in the cell inner membrane. The enzyme catalyses 4-(trimethylamino)butanoate(in) + (R)-carnitine(out) = 4-(trimethylamino)butanoate(out) + (R)-carnitine(in). It participates in amine and polyamine metabolism; carnitine metabolism. Functionally, catalyzes the exchange of L-carnitine for gamma-butyrobetaine. The protein is L-carnitine/gamma-butyrobetaine antiporter of Escherichia coli O8 (strain IAI1).